The chain runs to 131 residues: Peptide methionine sulfoxide reductase MsrB (131 aa).

The MsrB domain occupies 8-130 (LDEWRSMLDP…NSVCIDLRPR (123 aa)). Zn(2+) contacts are provided by C47, C50, C96, and C99. Residue C119 is the Nucleophile of the active site.

It belongs to the MsrB Met sulfoxide reductase family. Zn(2+) serves as cofactor.

The enzyme catalyses L-methionyl-[protein] + [thioredoxin]-disulfide + H2O = L-methionyl-(R)-S-oxide-[protein] + [thioredoxin]-dithiol. This Pseudomonas putida (strain GB-1) protein is Peptide methionine sulfoxide reductase MsrB.